We begin with the raw amino-acid sequence, 345 residues long: Dihydroorotase (345 aa).

2 residues coordinate Zn(2+): His13 and His15. Substrate is bound by residues 15–17 (HLR) and Asn41. The Zn(2+) site is built by Lys100, His137, and His175. N6-carboxylysine is present on Lys100. A substrate-binding site is contributed by His137. Substrate is bound at residue Leu220. Residue Asp248 participates in Zn(2+) binding. The active site involves Asp248. Substrate is bound by residues His252 and Ala264.

This sequence belongs to the metallo-dependent hydrolases superfamily. DHOase family. Class II DHOase subfamily. In terms of assembly, homodimer. It depends on Zn(2+) as a cofactor.

It catalyses the reaction (S)-dihydroorotate + H2O = N-carbamoyl-L-aspartate + H(+). It functions in the pathway pyrimidine metabolism; UMP biosynthesis via de novo pathway; (S)-dihydroorotate from bicarbonate: step 3/3. Functionally, catalyzes the reversible cyclization of carbamoyl aspartate to dihydroorotate. In Laribacter hongkongensis (strain HLHK9), this protein is Dihydroorotase.